The chain runs to 517 residues: Crotonobetaine/carnitine--CoA ligase (517 aa).

The protein belongs to the ATP-dependent AMP-binding enzyme family.

The enzyme catalyses 4-(trimethylamino)butanoate + ATP + CoA = 4-(trimethylamino)butanoyl-CoA + AMP + diphosphate. It carries out the reaction crotonobetaine + ATP + CoA = crotonobetainyl-CoA + AMP + diphosphate. It catalyses the reaction (R)-carnitine + ATP + CoA = (R)-carnitinyl-CoA + AMP + diphosphate. The protein operates within amine and polyamine metabolism; carnitine metabolism. Its function is as follows. Catalyzes the transfer of CoA to carnitine, generating the initial carnitinyl-CoA needed for the CaiB reaction cycle. Also has activity toward crotonobetaine and gamma-butyrobetaine. In Escherichia fergusonii (strain ATCC 35469 / DSM 13698 / CCUG 18766 / IAM 14443 / JCM 21226 / LMG 7866 / NBRC 102419 / NCTC 12128 / CDC 0568-73), this protein is Crotonobetaine/carnitine--CoA ligase.